The following is a 313-amino-acid chain: Curved DNA-binding protein (313 aa).

Positions Asp-5 to Gly-69 constitute a J domain. The tract at residues Gly-71 to Val-93 is disordered.

It localises to the cytoplasm. The protein localises to the nucleoid. Functionally, DNA-binding protein that preferentially recognizes a curved DNA sequence. It is probably a functional analog of DnaJ; displays overlapping activities with DnaJ, but functions under different conditions, probably acting as a molecular chaperone in an adaptive response to environmental stresses other than heat shock. Lacks autonomous chaperone activity; binds native substrates and targets them for recognition by DnaK. Its activity is inhibited by the binding of CbpM. In Coxiella burnetii (strain Dugway 5J108-111), this protein is Curved DNA-binding protein.